We begin with the raw amino-acid sequence, 1444 residues long: Bromodomain-containing protein 4 (1444 aa).

Disordered stretches follow at residues 1-44 (MGDG…PKRQ), 154-217 (VEIS…PQPI), 279-362 (AAPP…KQQE), 492-523 (PVMA…ERAQ), 540-645 (AALS…GGAA), 722-986 (CLRK…SSQP), and 1020-1422 (TSLM…RREA). A compositionally biased stretch (low complexity) spans 11–27 (SGSSSSQGQPSSQAPSS). One can recognise a Bromo 1 domain in the interval 43 to 149 (RQTNQLQYLL…KVFLTKISEM (107 aa)). Over residues 186–196 (ASPQTRGLSNL) the composition is skewed to polar residues. Positions 206-216 (PQGPPTLPPQP) are enriched in pro residues. Over residues 303–319 (TTTPTANDQLNESSPAE) the composition is skewed to polar residues. Over residues 327–347 (PRRDNTRPSKLPKKEAPDSQH) the composition is skewed to basic and acidic residues. The Bromo 2 domain occupies 358–467 (PKQQEQLRYC…DVFEMRFAKM (110 aa)). Over residues 498 to 511 (SSSDTSSDSSSESE) the composition is skewed to low complexity. An NPS region region spans residues 498–517 (SSSDTSSDSSSESESSTDDS). Positions 538 to 610 (QLAALSQPQA…SKKLSKKEGG (73 aa)) are BID region. Over residues 549–569 (KPKKKEKEKKEKKKDKHKKKA) the composition is skewed to basic residues. An NET domain is found at 633–730 (DTEEDLGLTG…SCLRKKKKPA (98 aa)). Low complexity-rich tracts occupy residues 746–760 (GTSS…SSSS), 800–823 (LQPQ…HPSP), 919–954 (LQQS…QQQH), and 1036–1046 (PSLLQSVQVQS). The span at 1090 to 1109 (PLQTAQTQPGQHKVSMPSTK) shows a compositional bias: polar residues. Positions 1110–1121 (AQQIIQQQQATQ) are enriched in low complexity. The segment at 1126-1444 (RQHKADSYNS…LMAIFEENLF (319 aa)) is C-terminal (CTD) region. The span at 1151–1163 (QIPQYSLVHQSPS) shows a compositional bias: polar residues. Residues 1246 to 1255 (QDKEKFKQEP) are compositionally biased toward basic and acidic residues. Residues 1282–1296 (SSTTPSSGLKSSSDS) show a composition bias toward low complexity. The segment covering 1298–1357 (EQFRRAAREKEEREKALKAQVEQAEKDRLRKEQEKLRGRDEEDSIEPPRRPLEEPRRRQE) has biased composition (basic and acidic residues). Low complexity predominate over residues 1367–1389 (QHQTQAQAQTLNPAQSPSASQPT). Over residues 1405–1422 (QQREMARRREQERRRREA) the composition is skewed to basic and acidic residues.

This sequence belongs to the BET family. In terms of tissue distribution, widely expressed.

Its subcellular location is the nucleus. The protein resides in the chromosome. Chromatin reader protein that recognizes and binds acetylated histones and plays a key role in transmission of epigenetic memory across cell divisions and transcription regulation. Remains associated with acetylated chromatin throughout the entire cell cycle and provides epigenetic memory for postmitotic G1 gene transcription by preserving acetylated chromatin status and maintaining high-order chromatin structure. During interphase, plays a key role in regulating the transcription of signal-inducible genes by associating with the P-TEFb complex and recruiting it to promoters. The chain is Bromodomain-containing protein 4 (brd4) from Danio rerio (Zebrafish).